The following is a 239-amino-acid chain: Orotidine 5'-phosphate decarboxylase (239 aa).

Residues Asp15, Lys36, Asp63 to Thr72, Thr127, Arg189, Gln198, Gly218, and Arg219 contribute to the substrate site. Lys65 functions as the Proton donor in the catalytic mechanism.

It belongs to the OMP decarboxylase family. Type 1 subfamily. As to quaternary structure, homodimer.

The catalysed reaction is orotidine 5'-phosphate + H(+) = UMP + CO2. It functions in the pathway pyrimidine metabolism; UMP biosynthesis via de novo pathway; UMP from orotate: step 2/2. Its function is as follows. Catalyzes the decarboxylation of orotidine 5'-monophosphate (OMP) to uridine 5'-monophosphate (UMP). This Prochlorococcus marinus subsp. pastoris (strain CCMP1986 / NIES-2087 / MED4) protein is Orotidine 5'-phosphate decarboxylase.